The following is a 530-amino-acid chain: UDP-N-acetylmuramoyl-L-alanyl-D-glutamate--2,6-diaminopimelate ligase (530 aa).

Leu52 lines the UDP-N-acetyl-alpha-D-muramoyl-L-alanyl-D-glutamate pocket. 139–145 (GTSGKTT) is a binding site for ATP. UDP-N-acetyl-alpha-D-muramoyl-L-alanyl-D-glutamate-binding positions include 181 to 182 (TT), Ser208, and Arg216. Lys248 is modified (N6-carboxylysine). Residues Arg410, 434–437 (DNPR), Gly488, and Glu492 each bind meso-2,6-diaminopimelate. Residues 434-437 (DNPR) carry the Meso-diaminopimelate recognition motif motif.

It belongs to the MurCDEF family. MurE subfamily. Requires Mg(2+) as cofactor. Post-translationally, carboxylation is probably crucial for Mg(2+) binding and, consequently, for the gamma-phosphate positioning of ATP.

It is found in the cytoplasm. The catalysed reaction is UDP-N-acetyl-alpha-D-muramoyl-L-alanyl-D-glutamate + meso-2,6-diaminopimelate + ATP = UDP-N-acetyl-alpha-D-muramoyl-L-alanyl-gamma-D-glutamyl-meso-2,6-diaminopimelate + ADP + phosphate + H(+). The protein operates within cell wall biogenesis; peptidoglycan biosynthesis. Functionally, catalyzes the addition of meso-diaminopimelic acid to the nucleotide precursor UDP-N-acetylmuramoyl-L-alanyl-D-glutamate (UMAG) in the biosynthesis of bacterial cell-wall peptidoglycan. In Mycobacterium leprae (strain TN), this protein is UDP-N-acetylmuramoyl-L-alanyl-D-glutamate--2,6-diaminopimelate ligase.